A 117-amino-acid chain; its full sequence is Cuticular protein 47Eg (117 aa).

A signal peptide spans 1 to 16 (MKFFIAFACLLAVALA). In terms of domain architecture, Chitin-binding type R&amp;R spans 31 to 97 (VDGFAYAVEL…SANPPLPTPP (67 aa)).

Functionally, component of the larval cuticle. The sequence is that of Cuticular protein 47Eg (Cpr47Eg) from Drosophila melanogaster (Fruit fly).